The following is a 667-amino-acid chain: KFALFSVLTLLSFHAVFSFTPLHTQHPLDPITKEEFLAVQTIVQNKYPISNNKLAFHYIGVDDPEKDLVLKYETSPTLISIPRKIFVVAIINSQTHEILIDLTIKSIVSDNIHNGYGFPVLSAAEQFLAIDLPLKYPPFIASVNKRGLNISEIVCSSFTMGWFGEEKNSRTVRVDCFMKESTVNIYVRPITGITIVADLDLMKIVEYHDRDTEAVPTAENTEYQVSKQSPPFGPKQHSLTSHQPQGPGFQINGTSVSWANWKFHIGFDVRAGIVISLASIYDLEKHKSRRVLYKGYISELFVPYQDPTEEFYFKTFFDSGEFGFGLSTVSLIPNRDCPPHAQFIDTYIHSADGTPIFLENAICVFEQYGNIMWRHTETGIPNESIEESRTEVDLAIRTVVTVGNYDNVLDWEFKTSGWMKPSIALSGILEIKGTNIKHKDEIKEEIHGKLVSANSIGIYHDHFYIYYLDFDIDGTQNSFEKTSLKTVRIVDGGSKRKSYWTTETQTAKTESDAKITIGLAPAELVVVNPNIKTAVGNEVGYRLIPAIPAHPLLTEDDYPQIRGAFTNYNVWVTPYNRTEKWAGGLYVDHSRGDDTLAVWTKKNREIVNKDIVMWHVVGIHHVPAQEDFPIMPLLSTSFELRPTNFFERNPVLKTLPPRDFTWPGCSN.

Positions 1-18 (KFALFSVLTLLSFHAVFS) are cleaved as a signal peptide. Asparagine 149 is a glycosylation site (N-linked (GlcNAc...) asparagine). The cysteines at positions 155 and 176 are disulfide-linked. Positions 216–246 (PTAENTEYQVSKQSPPFGPKQHSLTSHQPQG) are disordered. The segment covering 218 to 229 (AENTEYQVSKQS) has biased composition (polar residues). N-linked (GlcNAc...) asparagine glycosylation is present at asparagine 252. 316–327 (FFDSGEFGFGLS) lines the substrate pocket. Residue aspartate 318 is the Proton acceptor of the active site. Cysteine 337 and cysteine 363 are disulfide-bonded. N-linked (GlcNAc...) asparagine glycosylation is present at asparagine 382. Residue 402 to 407 (VGNYDN) coordinates substrate. Tyrosine 405 (schiff-base intermediate with substrate; via topaquinone) is an active-site residue. The residue at position 405 (tyrosine 405) is a 2',4',5'-topaquinone. Histidine 460 and histidine 462 together coordinate Cu cation. Residues aspartate 469, phenylalanine 470, and aspartate 471 each coordinate Mn(2+). Asparagine 576 is a glycosylation site (N-linked (GlcNAc...) asparagine). Aspartate 610 and isoleucine 611 together coordinate Mn(2+). Histidine 621 contacts Cu cation.

The protein belongs to the copper/topaquinone oxidase family. In terms of assembly, homodimer. The cofactor is Cu cation. Zn(2+) is required as a cofactor. L-topaquinone serves as cofactor. It depends on Mn(2+) as a cofactor. In terms of processing, glycosylated; contains two carbohydrate chains per monomer. Post-translationally, topaquinone (TPQ) is generated by copper-dependent autoxidation of a specific tyrosyl residue.

The enzyme catalyses a primary methyl amine + O2 + H2O = an aldehyde + H2O2 + NH4(+). In Lens culinaris (Lentil), this protein is Primary amine oxidase.